A 266-amino-acid polypeptide reads, in one-letter code: Early E1A protein (266 aa).

Residues 39 to 47 (PSLYELYDL) form an interaction with RB1 in competition with E2F1 region. The interaction with UBE2I stretch occupies residues 75-145 (EGLFLPEPPV…AAAAADRERE (71 aa)). The PXLXP motif, interaction with host ZMYND11 signature appears at 98-102 (PQLHP). Positions 107–111 (LLCYE) match the LXCXE motif, interaction with host RB1 and TMEM173/STING motif. A zinc finger lies at 159 to 179 (CKSCEHHRNSTGNTDLMCSLC). Residues 195 to 226 (NEPEPNSTLDGDERPSPPKLGSAVPEGVIKPV) form a disordered region. Positions 255–259 (PVDLS) match the PXDLS motif, CTBP-binding motif. The Nuclear localization signal motif lies at 261 to 265 (KRPRC).

The protein belongs to the adenoviridae E1A protein family. Interacts with host UBE2I; this interaction interferes with polySUMOylation. Interacts with host RB1; this interaction induces the aberrant dissociation of RB1-E2F1 complex thereby disrupting the activity of RB1 and activating E2F1-regulated genes. Interacts with host ATF7; the interaction enhances ATF7-mediated viral transactivation activity which requires the zinc binding domains of both proteins. Isoform early E1A 32 kDa protein and isoform early E1A 26 kDa protein interact (via N-terminus) with CUL1 and E3 ubiquitin ligase RBX1; these interactions inhibit RBX1-CUL1-dependent elongation reaction of ubiquitin chains and attenuate ubiquitination of SCF(FBXW7) target proteins. Interacts (via PXLXP motif) with host ZMYND11/BS69 (via MYND-type zinc finger); this interaction inhibits E1A mediated transactivation. Interacts with host EP300; this interaction stimulates the acetylation of RB1 by recruiting EP300 and RB1 into a multimeric-protein complex. Interacts with host CTBP1 and CTBP2; this interaction seems to potentiate viral replication. Interacts with host DCAF7. Interacts with host DYRK1A. Interacts with host KPNA4; this interaction allows E1A import into the host nucleus. Interacts with host EP400; this interaction stabilizes MYC. Interacts with host TBP protein; this interaction probably disrupts the TBP-TATA complex. Interacts (via LXCXE motif) with host TMEM173/STING; this interaction impairs the ability of TMEM173/STING to sense cytosolic DNA and promote the production of type I interferon (IFN-alpha and IFN-beta). Interacts (via C-terminus) with host ZBED1/hDREF (via C-terminus); the interaction is direct.

It localises to the host nucleus. Plays a role in viral genome replication by driving entry of quiescent cells into the cell cycle. Stimulation of progression from G1 to S phase allows the virus to efficiently use the cellular DNA replicating machinery to achieve viral genome replication. E1A protein has both transforming and trans-activating activities. Induces the disassembly of the E2F1 transcription factor from RB1 by direct competition for the same binding site on RB1, with subsequent transcriptional activation of E2F1-regulated S-phase genes and of the E2 region of the adenoviral genome. Release of E2F1 leads to the ARF-mediated inhibition of MDM2 and causes TP53/p53 to accumulate because it is not targeted for degradation by MDM2-mediated ubiquitination anymore. This increase in TP53, in turn, would arrest the cell proliferation and direct its death but this effect is counteracted by the viral protein E1B-55K. Inactivation of the ability of RB1 to arrest the cell cycle is critical for cellular transformation, uncontrolled cellular growth and proliferation induced by viral infection. Interaction with RBX1 and CUL1 inhibits ubiquitination of the proteins targeted by SCF(FBXW7) ubiquitin ligase complex, and may be linked to unregulated host cell proliferation. The tumorigenesis-restraining activity of E1A may be related to the disruption of the host CtBP-CtIP complex through the CtBP binding motif. Interaction with host TMEM173/STING impairs the ability of TMEM173/STING to sense cytosolic DNA and promote the production of type I interferon (IFN-alpha and IFN-beta). Promotes the sumoylation of host ZBED1/hDREF with SUMO1. In Homo sapiens (Human), this protein is Early E1A protein.